Reading from the N-terminus, the 388-residue chain is MKFVDEAVIRVEAGDGGSGCVSFRREKYIPDGGPDGGDGGDGGSVYLQADENHNTLIEYRFERFHMAERGENGRGRDCTGHSGKDLILKVPVGTRAIDDETEEVLGDLTTHGQKLLVAKGGFHGLGNTRFKSSTNRAPRQKTLGTPGEVRSLKLELLLLADVGLLGMPNAGKSTFIRAVSRATPKVADYPFTTLVPNLGVVNPRPGQSFVIADIPGLIEGAAEGAGLGIRFLKHLERCRILLHIIDIEPIDGTDPVDSARAIVGELEKYSPKLASKPRWLVFNKADLLLEDELKEKVARVVKELGWEGDVYTISAYSRDGTKELATKLLDFIQSLPPEDKDANPDAEVEFKWDNYHQANIDAINEDYDDEFDDDFDDDDYDVEVIYQR.

Positions Met-1 to Leu-159 constitute an Obg domain. The 174-residue stretch at Ala-160–Gln-333 folds into the OBG-type G domain. GTP contacts are provided by residues Gly-166–Ser-173, Phe-191–Val-195, Asp-213–Gly-216, Asn-283–Asp-286, and Ser-314–Tyr-316. 2 residues coordinate Mg(2+): Ser-173 and Thr-193.

This sequence belongs to the TRAFAC class OBG-HflX-like GTPase superfamily. OBG GTPase family. Monomer. Mg(2+) serves as cofactor.

It localises to the cytoplasm. An essential GTPase which binds GTP, GDP and possibly (p)ppGpp with moderate affinity, with high nucleotide exchange rates and a fairly low GTP hydrolysis rate. Plays a role in control of the cell cycle, stress response, ribosome biogenesis and in those bacteria that undergo differentiation, in morphogenesis control. The sequence is that of GTPase Obg from Shewanella sp. (strain MR-4).